Reading from the N-terminus, the 247-residue chain is Triosephosphate isomerase (247 aa).

Position 9–11 (9–11) interacts with substrate; it reads NWK. Histidine 94 serves as the catalytic Electrophile. Glutamate 166 acts as the Proton acceptor in catalysis. Substrate is bound by residues glycine 172, serine 211, and 232 to 233; that span reads GG.

Belongs to the triosephosphate isomerase family. As to quaternary structure, homodimer.

The protein localises to the cytoplasm. The enzyme catalyses D-glyceraldehyde 3-phosphate = dihydroxyacetone phosphate. It participates in carbohydrate biosynthesis; gluconeogenesis. It functions in the pathway carbohydrate degradation; glycolysis; D-glyceraldehyde 3-phosphate from glycerone phosphate: step 1/1. Involved in the gluconeogenesis. Catalyzes stereospecifically the conversion of dihydroxyacetone phosphate (DHAP) to D-glyceraldehyde-3-phosphate (G3P). This is Triosephosphate isomerase from Cupriavidus taiwanensis (strain DSM 17343 / BCRC 17206 / CCUG 44338 / CIP 107171 / LMG 19424 / R1) (Ralstonia taiwanensis (strain LMG 19424)).